We begin with the raw amino-acid sequence, 375 residues long: Secreted LysM effector Vd4LysM (375 aa).

The N-terminal stretch at Met-1 to Ala-24 is a signal peptide. One can recognise a LysM 1 domain in the interval Ser-57 to Val-104. The segment at Gly-108–Ile-139 is disordered. Residues Thr-116–Pro-129 are compositionally biased toward low complexity. Residues Lys-149 to Val-195 form the LysM 2 domain. Residues Thr-206–Pro-217 are compositionally biased toward low complexity. Residues Thr-206–Gln-225 are disordered. One can recognise a LysM 3 domain in the interval Lys-237–Val-283. The tract at residues Gly-287–Gln-317 is disordered. The segment covering Thr-296–Gln-317 has biased composition (low complexity). A LysM 4 domain is found at Lys-326–Val-372.

It belongs to the secreted LysM effector family.

Its function is as follows. Might have a role in sequestration of chitin oligosaccharides (breakdown products of fungal cell walls that are released during invasion and act as triggers of host immunity) to dampen host defense. Does not play an important role during host colonization. This chain is Secreted LysM effector Vd4LysM, found in Verticillium dahliae (strain VdLs.17 / ATCC MYA-4575 / FGSC 10137) (Verticillium wilt).